A 463-amino-acid chain; its full sequence is NADH-quinone oxidoreductase subunit N (463 aa).

A run of 14 helical transmembrane segments spans residues 5–25 (LLYG…LMLL), 34–54 (AGSA…VMQL), 72–92 (FSEI…VYSL), 99–119 (KYWI…DSAG), 120–140 (FISL…LMVL), 154–174 (YLLL…LVYG), 196–216 (LAAS…FPFH), 230–250 (VTAF…VRIL), 259–279 (AVTV…ITAI), 286–303 (KMLA…MFAL), 314–334 (LLYY…CFSI), 356–376 (AILL…PGFL), 393–413 (VAVL…GVVL), and 432–452 (LCWT…FMLL).

This sequence belongs to the complex I subunit 2 family. As to quaternary structure, NDH-1 is composed of 14 different subunits. Subunits NuoA, H, J, K, L, M, N constitute the membrane sector of the complex.

It localises to the cell inner membrane. It catalyses the reaction a quinone + NADH + 5 H(+)(in) = a quinol + NAD(+) + 4 H(+)(out). NDH-1 shuttles electrons from NADH, via FMN and iron-sulfur (Fe-S) centers, to quinones in the respiratory chain. The immediate electron acceptor for the enzyme in this species is believed to be ubiquinone. Couples the redox reaction to proton translocation (for every two electrons transferred, four hydrogen ions are translocated across the cytoplasmic membrane), and thus conserves the redox energy in a proton gradient. This chain is NADH-quinone oxidoreductase subunit N, found in Pelobacter propionicus (strain DSM 2379 / NBRC 103807 / OttBd1).